The following is a 496-amino-acid chain: Glycine receptor subunit beta (496 aa).

The first 22 residues, 1–22 (MKFSLAVSFFILMSLLFEDACS), serve as a signal peptide directing secretion. At 23 to 268 (KEKSSKKGKG…IFTLRRQVGF (246 aa)) the chain is on the extracellular side. Asn54 carries N-linked (GlcNAc...) asparagine glycosylation. 2 residues coordinate glycine: Arg108 and Ser174. Cys183 and Cys197 are oxidised to a cystine. Residue Asn242 is glycosylated (N-linked (GlcNAc...) asparagine). A disulfide bridge connects residues Cys243 and Cys255. A glycine-binding site is contributed by Thr250. The chain crosses the membrane as a helical span at residues 269–289 (YMMGVYAPTLLIVVLSWLSFW). The Cytoplasmic segment spans residues 290-294 (INPDA). The chain crosses the membrane as a helical span at residues 295-315 (SAARVPLGIFSVLSLASECTT). The Extracellular segment spans residues 316–327 (LAAELPKVSYVK). The chain crosses the membrane as a helical span at residues 328-349 (ALDVWLIACLLFGFASLVEYAV). Residues 350 to 471 (VQVMLNNPKR…KPVIPTAAKR (122 aa)) lie on the Cytoplasmic side of the membrane. Thr391 carries the post-translational modification Phosphothreonine. The chain crosses the membrane as a helical span at residues 472 to 495 (IDLYARALFPFCFLFFNVIYWSIY). Position 496 (Leu496) is a topological domain, extracellular.

The protein belongs to the ligand-gated ion channel (TC 1.A.9) family. Glycine receptor (TC 1.A.9.3) subfamily. GLRB sub-subfamily. As to quaternary structure, forms heteropentamers with glycin receptor alpha subunits. Heteropentamers with GLRA1 can be composed of two GLRA1 and three GLRB subunits, or three GLRA1 and two GLRB subunits, or four GLRA1 subunits and one GLRB subunit. Forms heteropentamers with GLRA2. Functional GLRB-GLRA2 heteropentamers contain four GLRA2 subunits and one GLRB subunit, although alternative subunit composition cannot be excluded. Forms a heteropentamer with GLRA3. Interacts with GPHN. In terms of tissue distribution, detected in spinal cord and brain stem (at protein level). Detected in spinal cord, cerebellum and brain cortex.

It localises to the postsynaptic cell membrane. It is found in the cell membrane. The protein resides in the synapse. The protein localises to the perikaryon. Its subcellular location is the cell projection. It localises to the dendrite. It is found in the cytoplasm. The enzyme catalyses chloride(in) = chloride(out). Its activity is regulated as follows. Channel opening is triggered by extracellular glycine. Heteropentameric channels composed of GLRB and GLRA1 are activated by lower glycine levels than homopentameric GLRA1. In terms of biological role, subunit of heteromeric glycine-gated chloride channels. Plays an important role in the down-regulation of neuronal excitability. Contributes to the generation of inhibitory postsynaptic currents. In Rattus norvegicus (Rat), this protein is Glycine receptor subunit beta (Glrb).